A 622-amino-acid chain; its full sequence is 1-deoxy-D-xylulose-5-phosphate synthase (622 aa).

Thiamine diphosphate contacts are provided by residues histidine 80 and 121–123 (GHS). Aspartate 152 lines the Mg(2+) pocket. Thiamine diphosphate is bound by residues 153–154 (GA), asparagine 181, tyrosine 288, and glutamate 370. Asparagine 181 contributes to the Mg(2+) binding site.

The protein belongs to the transketolase family. DXPS subfamily. In terms of assembly, homodimer. It depends on Mg(2+) as a cofactor. The cofactor is thiamine diphosphate.

The catalysed reaction is D-glyceraldehyde 3-phosphate + pyruvate + H(+) = 1-deoxy-D-xylulose 5-phosphate + CO2. It functions in the pathway metabolic intermediate biosynthesis; 1-deoxy-D-xylulose 5-phosphate biosynthesis; 1-deoxy-D-xylulose 5-phosphate from D-glyceraldehyde 3-phosphate and pyruvate: step 1/1. Its function is as follows. Catalyzes the acyloin condensation reaction between C atoms 2 and 3 of pyruvate and glyceraldehyde 3-phosphate to yield 1-deoxy-D-xylulose-5-phosphate (DXP). The polypeptide is 1-deoxy-D-xylulose-5-phosphate synthase (Shewanella sp. (strain MR-4)).